Here is a 445-residue protein sequence, read N- to C-terminus: Argininosuccinate lyase (445 aa).

The protein belongs to the lyase 1 family. Argininosuccinate lyase subfamily.

It localises to the cytoplasm. The catalysed reaction is 2-(N(omega)-L-arginino)succinate = fumarate + L-arginine. It functions in the pathway amino-acid biosynthesis; L-arginine biosynthesis; L-arginine from L-ornithine and carbamoyl phosphate: step 3/3. In Xylella fastidiosa (strain Temecula1 / ATCC 700964), this protein is Argininosuccinate lyase.